An 861-amino-acid chain; its full sequence is Nuclear pore complex protein NUP93A (861 aa).

The protein belongs to the nucleoporin interacting component (NIC) family. As to quaternary structure, part of the nuclear pore complex (NPC). The NPC has an eight-fold symmetrical structure comprising a central transport channel and two rings, the cytoplasmic and nuclear rings, to which eight filaments are attached. The cytoplasmic filaments have loose ends, while the nuclear filaments are joined in a distal ring, forming a nuclear basket. NPCs are highly dynamic in configuration and composition, and can be devided in 3 subcomplexes, the NUP62 subcomplex, the NUP107-160 subcomplex and the NUP93 subcomplex, containing approximately 30 different nucleoporin proteins.

The protein resides in the nucleus envelope. The protein localises to the nucleus. It is found in the nuclear pore complex. The polypeptide is Nuclear pore complex protein NUP93A (Arabidopsis thaliana (Mouse-ear cress)).